Reading from the N-terminus, the 30-residue chain is Cycloviolacin-O2 (30 aa).

A cross-link (cyclopeptide (Gly-Asn)) is located at residues 1-30 (GIPCGESCVWIPCISSAIGCSCKSKVCYRN). 3 disulfide bridges follow: Cys-4–Cys-20, Cys-8–Cys-22, and Cys-13–Cys-27.

This is a cyclic peptide.

Probably participates in a plant defense mechanism. The sequence is that of Cycloviolacin-O2 from Viola biflora (Yellow wood violet).